We begin with the raw amino-acid sequence, 282 residues long: Parvulin-like PPIase (282 aa).

The signal sequence occupies residues 1 to 20; it reads MKKLSVIFLSVSMLSSIAFG. Residues 138–231 form the PpiC domain; that stretch reads KEQIKVAHIL…FGWHIIKVLE (94 aa).

The protein belongs to the PpiC/parvulin rotamase family.

It is found in the cell outer membrane. The enzyme catalyses [protein]-peptidylproline (omega=180) = [protein]-peptidylproline (omega=0). This is Parvulin-like PPIase (plp) from Rickettsia prowazekii (strain Madrid E).